A 273-amino-acid polypeptide reads, in one-letter code: Type II iodothyronine deiodinase (273 aa).

Residues 1 to 9 are Lumenal-facing; sequence MGILSVDLL. Residues 10–34 traverse the membrane as a helical; Signal-anchor for type III membrane protein segment; sequence ITLQILPVFFSNCLFLALYDSVILL. Residues 35-273 are Cytoplasmic-facing; that stretch reads KHVVLLLSRS…KRUKKTRLAG (239 aa). Residue Sec133 is part of the active site. 2 non-standard amino acids (selenocysteine) are found at residues Sec133 and Sec266.

Belongs to the iodothyronine deiodinase family. In terms of assembly, predominantly monomer. Can form homodimers but homodimerization is not essential for enzyme activity. Interacts with USP20 and USP33. Interacts with MARCHF6. Post-translationally, ubiquitinated by MARCHF6, leading to its degradation by the proteasome. Deubiquitinated by USP20 and USP33. In terms of tissue distribution, isoform 1 is expressed in the lung, trachea, kidney, heart, skeletal muscle, placenta, fetal brain and several regions of the adult brain. Isoform 2 is expressed in the brain, heart, kidney and trachea.

It localises to the endoplasmic reticulum membrane. It catalyses the reaction 3,3',5-triiodo-L-thyronine + iodide + A + H(+) = L-thyroxine + AH2. It carries out the reaction 3,3'-diiodo-L-thyronine + iodide + A + H(+) = 3,3',5'-triiodo-L-thyronine + AH2. The enzyme catalyses 3'-iodo-L-thyronine + iodide + A + H(+) = 3',5'-diiodo-L-thyronine + AH2. The catalysed reaction is 3,3'-diiodothyronamine + iodide + A + H(+) = 3,3',5'-triiodothyronamine + AH2. It catalyses the reaction 3'-iodothyronamine + iodide + A + H(+) = 3',5'-diiodothyronamine + AH2. In terms of biological role, plays a crucial role in the metabolism of thyroid hormones (TH) and has specific roles in TH activation and inactivation by deiodination. Catalyzes the deiodination of L-thyroxine (T4) to 3,5,3'-triiodothyronine (T3), 3,3',5'-triiodothyronine (rT3) to 3,3'-diiodothyronine (3,3'-T2) and 3',5'-diiodothyronine (3',5'-T2) to 3'-monoiodothyronine (3'-T1) via outer-ring deiodination (ORD). Catalyzes the phenolic ring deiodinations of 3,3',5'-triiodothyronamine and 3',5'- diiodothyronamine. The sequence is that of Type II iodothyronine deiodinase (DIO2) from Homo sapiens (Human).